We begin with the raw amino-acid sequence, 938 residues long: Isoleucine--tRNA ligase (938 aa).

Positions 58–68 match the 'HIGH' region motif; it reads PYANGSIHIGH. Lys-183 carries the post-translational modification N6-acetyllysine. Glu-561 is a binding site for L-isoleucyl-5'-AMP. The 'KMSKS' region motif lies at 602-606; that stretch reads KMSKS. Lys-605 contacts ATP. The Zn(2+) site is built by Cys-901, Cys-904, Cys-921, and Cys-924.

Belongs to the class-I aminoacyl-tRNA synthetase family. IleS type 1 subfamily. As to quaternary structure, monomer. Zn(2+) is required as a cofactor.

The protein resides in the cytoplasm. The catalysed reaction is tRNA(Ile) + L-isoleucine + ATP = L-isoleucyl-tRNA(Ile) + AMP + diphosphate. Catalyzes the attachment of isoleucine to tRNA(Ile). As IleRS can inadvertently accommodate and process structurally similar amino acids such as valine, to avoid such errors it has two additional distinct tRNA(Ile)-dependent editing activities. One activity is designated as 'pretransfer' editing and involves the hydrolysis of activated Val-AMP. The other activity is designated 'posttransfer' editing and involves deacylation of mischarged Val-tRNA(Ile). This is Isoleucine--tRNA ligase from Escherichia coli O127:H6 (strain E2348/69 / EPEC).